The primary structure comprises 1222 residues: ATP-dependent helicase/nuclease subunit A (1222 aa).

Residues 39-495 (QKRTAQQIEA…ILLKENFRSQ (457 aa)) form the UvrD-like helicase ATP-binding domain. 60–67 (ASAGSGKT) provides a ligand contact to ATP. One can recognise a UvrD-like helicase C-terminal domain in the interval 524-810 (QLIAGSHAQT…NLMTIHKSKG (287 aa)).

This sequence belongs to the helicase family. AddA subfamily. As to quaternary structure, heterodimer of AddA and AddB/RexB. Mg(2+) serves as cofactor.

It carries out the reaction Couples ATP hydrolysis with the unwinding of duplex DNA by translocating in the 3'-5' direction.. The catalysed reaction is ATP + H2O = ADP + phosphate + H(+). Its function is as follows. The heterodimer acts as both an ATP-dependent DNA helicase and an ATP-dependent, dual-direction single-stranded exonuclease. Recognizes the chi site generating a DNA molecule suitable for the initiation of homologous recombination. The AddA nuclease domain is required for chi fragment generation; this subunit has the helicase and 3' -&gt; 5' nuclease activities. This is ATP-dependent helicase/nuclease subunit A from Streptococcus pyogenes serotype M6 (strain ATCC BAA-946 / MGAS10394).